Here is a 162-residue protein sequence, read N- to C-terminus: Sorting nexin-3 (162 aa).

A disordered region spans residues 1–23 (MPREFKSFGSTEKSLLSKGHGEP). In terms of domain architecture, PX spans 38 to 161 (IEVHNPKTHI…VRFIEAEKFV (124 aa)). R81, S83, K112, and R127 together coordinate a 1,2-diacyl-sn-glycero-3-phospho-(1D-myo-inositol-3-phosphate).

It belongs to the sorting nexin family. As to quaternary structure, monomer. Interacts with RBD2, YIF1, YIP1 and YIP5.

It is found in the cytoplasm. The protein resides in the golgi apparatus membrane. Its subcellular location is the prevacuolar compartment membrane. Required for retention of late Golgi membrane proteins. Component of the retrieval machinery that functions by direct interaction with the cytosolic tails of certain TGN membrane proteins during the sorting/budding process at the prevacuolar compartment. Binds phosphatidylinositol 3-phosphate (PtdIns(P3)). The chain is Sorting nexin-3 (SNX3) from Saccharomyces cerevisiae (strain ATCC 204508 / S288c) (Baker's yeast).